Consider the following 213-residue polypeptide: dITP/XTP pyrophosphatase (213 aa).

Position 7 to 12 (7 to 12) interacts with substrate; sequence TSNLDK. Aspartate 74 functions as the Proton acceptor in the catalytic mechanism. Aspartate 74 provides a ligand contact to Mg(2+). Residues serine 75, 165 to 168, lysine 188, and 193 to 194 each bind substrate; these read FGYD and HR.

The protein belongs to the HAM1 NTPase family. Homodimer. It depends on Mg(2+) as a cofactor.

It catalyses the reaction XTP + H2O = XMP + diphosphate + H(+). The catalysed reaction is dITP + H2O = dIMP + diphosphate + H(+). The enzyme catalyses ITP + H2O = IMP + diphosphate + H(+). Functionally, pyrophosphatase that catalyzes the hydrolysis of nucleoside triphosphates to their monophosphate derivatives, with a high preference for the non-canonical purine nucleotides XTP (xanthosine triphosphate), dITP (deoxyinosine triphosphate) and ITP. Seems to function as a house-cleaning enzyme that removes non-canonical purine nucleotides from the nucleotide pool, thus preventing their incorporation into DNA/RNA and avoiding chromosomal lesions. This Campylobacter concisus (strain 13826) protein is dITP/XTP pyrophosphatase.